Reading from the N-terminus, the 691-residue chain is Lipase 2 (691 aa).

The first 37 residues, 1 to 37 (MLRGQEERKYSIRKYSIGVVSVLAATMFVVTSHEAQA), serve as a signal peptide directing secretion. The tract at residues 34-267 (EAQASEKIPT…KPTDKNTDNK (234 aa)) is disordered. A propeptide spanning residues 38-296 (SEKIPTTNAA…ADAKKVRPLK (259 aa)) is cleaved from the precursor. Residues 41–72 (IPTTNAAAQKETLNQPGEQGNAITSHQMQSGK) are compositionally biased toward polar residues. Positions 73–82 (QLDDMHKENG) are enriched in basic and acidic residues. Composition is skewed to polar residues over residues 94–115 (LQSS…NDNQ), 125–135 (SKQSHQNNATN), 142–172 (DQIQ…QPSI), and 186–196 (PTSTTPPSNDK). Basic and acidic residues-rich tracts occupy residues 197–214 (TAPK…KHPN) and 258–267 (KPTDKNTDNK). The active-site Nucleophile is the serine 413. Glycine 580 serves as a coordination point for Ca(2+). Aspartate 604 acts as the Charge relay system in catalysis. Aspartate 645 contacts Ca(2+). Histidine 646 serves as the catalytic Charge relay system. Aspartate 648, aspartate 653, and aspartate 656 together coordinate Ca(2+).

Belongs to the AB hydrolase superfamily. Lipase family.

The protein resides in the secreted. The catalysed reaction is a triacylglycerol + H2O = a diacylglycerol + a fatty acid + H(+). The chain is Lipase 2 (lip2) from Staphylococcus aureus (strain MRSA252).